The following is a 71-amino-acid chain: Heat-stable enterotoxin B (71 aa).

A signal peptide spans 1-19; that stretch reads MKKIILALVLMLFSFCTLG. A propeptide spanning residues 20-52 is cleaved from the precursor; that stretch reads QETASMHLDDTLSAPIAAEINRKACDTQTPSPS. Intrachain disulfides connect C59/C64, C60/C68, and C63/C71.

Belongs to the heat-stable enterotoxin family.

The protein resides in the secreted. Its function is as follows. Toxin which activates the particulate form of guanylate cyclase and increases cyclic GMP levels within the host intestinal epithelial cells. Could play an important role in pathogenesis. This is Heat-stable enterotoxin B (ystB) from Yersinia enterocolitica.